A 627-amino-acid polypeptide reads, in one-letter code: UvrABC system protein C (627 aa).

In terms of domain architecture, GIY-YIG spans 26-105; sequence PSPGVYQFRN…IKELKPRYNV (80 aa). The UVR domain maps to 219-254; it reads STMIRSLTSAMQLFARELKFERAAEIKMQLESLKRY.

This sequence belongs to the UvrC family. Interacts with UvrB in an incision complex.

It localises to the cytoplasm. The UvrABC repair system catalyzes the recognition and processing of DNA lesions. UvrC both incises the 5' and 3' sides of the lesion. The N-terminal half is responsible for the 3' incision and the C-terminal half is responsible for the 5' incision. This chain is UvrABC system protein C, found in Pelodictyon phaeoclathratiforme (strain DSM 5477 / BU-1).